Reading from the N-terminus, the 165-residue chain is Phosphopantetheine adenylyltransferase (165 aa).

Substrate is bound at residue serine 10. ATP-binding positions include 10–11 (SF) and histidine 18. The substrate site is built by lysine 42, serine 79, and arginine 93. ATP contacts are provided by residues 94–96 (GLR), glutamate 104, and 129–135 (VRPITAT).

This sequence belongs to the bacterial CoaD family. In terms of assembly, homohexamer. Requires Mg(2+) as cofactor.

It is found in the cytoplasm. The catalysed reaction is (R)-4'-phosphopantetheine + ATP + H(+) = 3'-dephospho-CoA + diphosphate. The protein operates within cofactor biosynthesis; coenzyme A biosynthesis; CoA from (R)-pantothenate: step 4/5. Reversibly transfers an adenylyl group from ATP to 4'-phosphopantetheine, yielding dephospho-CoA (dPCoA) and pyrophosphate. This is Phosphopantetheine adenylyltransferase from Bradyrhizobium diazoefficiens (strain JCM 10833 / BCRC 13528 / IAM 13628 / NBRC 14792 / USDA 110).